The sequence spans 494 residues: MNLGEILSSVKLPRPLAPELAQTEVTGLAYDSRRVTPGVLFFAFPGSKADGREFAADALARGAVAVISESLAPPDLAARWIQVEHGRHALALAARTFFGRPDERLGLTGITGTNGKTTTAYLTDSVLRAAGGVTAMIGTIEYHLAGRVLKAVNTTPESLDLLQIFSDLLRAGGTHVTMEVSSHALALGRVHGLNFHTAVFTNLTRDHLDFHGDMERYFAAKQMLFEGAGGNPPRFAVLNTDDEYSRRLRLHARTERLWYGMTPEADLRPRHIVSSFKGLRFDLQFRKQRFTIESPLIGKINVYNILAACATGFSYGLAPEVVARGIASLKAVPGRFERVDEGQPFVVVVDYAHTDDALRNVIAVARGLNPRRVITLFGCGGDRDRAKRPLMGKAAAEASDFVVLTSDNPRSEDPLTIMNDALVGIRRTDVAHVVEPDREAAIRRAIKEAREGDIVILAGKGHETYQVLKDKTIDFDDRAVAREVLKGYGYHQTQ.

Serine 32 serves as a coordination point for UDP-N-acetyl-alpha-D-muramoyl-L-alanyl-D-glutamate. Residue 112-118 (GTNGKTT) coordinates ATP. UDP-N-acetyl-alpha-D-muramoyl-L-alanyl-D-glutamate is bound by residues asparagine 153, 154–155 (TT), serine 181, and arginine 189. Lysine 221 is subject to N6-carboxylysine. Meso-2,6-diaminopimelate contacts are provided by residues arginine 383, 407-410 (DNPR), glycine 459, and glutamate 463. Positions 407-410 (DNPR) match the Meso-diaminopimelate recognition motif motif.

Belongs to the MurCDEF family. MurE subfamily. Mg(2+) is required as a cofactor. Carboxylation is probably crucial for Mg(2+) binding and, consequently, for the gamma-phosphate positioning of ATP.

The protein resides in the cytoplasm. The catalysed reaction is UDP-N-acetyl-alpha-D-muramoyl-L-alanyl-D-glutamate + meso-2,6-diaminopimelate + ATP = UDP-N-acetyl-alpha-D-muramoyl-L-alanyl-gamma-D-glutamyl-meso-2,6-diaminopimelate + ADP + phosphate + H(+). The protein operates within cell wall biogenesis; peptidoglycan biosynthesis. Catalyzes the addition of meso-diaminopimelic acid to the nucleotide precursor UDP-N-acetylmuramoyl-L-alanyl-D-glutamate (UMAG) in the biosynthesis of bacterial cell-wall peptidoglycan. This chain is UDP-N-acetylmuramoyl-L-alanyl-D-glutamate--2,6-diaminopimelate ligase, found in Solibacter usitatus (strain Ellin6076).